Here is a 333-residue protein sequence, read N- to C-terminus: Olfactory receptor 9S13 (333 aa).

Over 1–35 the chain is Extracellular; the sequence is MATAVHRNGSLTPVSLRVFVLVGFGGGALTQALLF. Residue asparagine 8 is glycosylated (N-linked (GlcNAc...) asparagine). The chain crosses the membrane as a helical span at residues 36-56; that stretch reads AVFLVLYVVTVLGNLTMIVVI. Topologically, residues 57–72 are cytoplasmic; sequence TLDARLHSPMYFFLKN. Residues 73–93 form a helical membrane-spanning segment; the sequence is LSFVDLCYSSAIAPNALANFL. At 94–106 the chain is on the extracellular side; the sequence is STSKVISFEACAT. A disulfide bridge links cysteine 104 with cysteine 196. A helical membrane pass occupies residues 107–127; it reads QFFFFSLLATTETFLLAVMAY. Over 128 to 150 the chain is Cytoplasmic; sequence DRFMAICSPLRYPVTMCPTTCTR. The helical transmembrane segment at 151 to 171 threads the bilayer; that stretch reads LVLGTFCVGCLNSIVQTSLTF. Residues 172–203 are Extracellular-facing; the sequence is QLPFCSSNRIDHFYCDVPPLLQLACASTALNE. A helical membrane pass occupies residues 204–224; the sequence is LFLFGLCGFIIVSTTLAVLVS. At 225-251 the chain is on the cytoplasmic side; the sequence is YGYITVTILRMHSGSGRHKVFSTCGSH. The chain crosses the membrane as a helical span at residues 252 to 272; it reads LTAVSLFYGTLFVMYAQPGAL. Topologically, residues 273–278 are extracellular; it reads TSMEQG. A helical transmembrane segment spans residues 279–299; sequence KVVSIFYTLVIPMLNPLIYSL. Over 300-333 the chain is Cytoplasmic; sequence RNKDVKDALQRLGQRHSLVKAVRGCPAAGGNASV.

Belongs to the G-protein coupled receptor 1 family.

It is found in the cell membrane. Functionally, odorant receptor. The polypeptide is Olfactory receptor 9S13 (Mus musculus (Mouse)).